A 138-amino-acid chain; its full sequence is Ribosome-binding factor A (138 aa).

The protein belongs to the RbfA family. Monomer. Binds 30S ribosomal subunits, but not 50S ribosomal subunits or 70S ribosomes.

The protein resides in the cytoplasm. Functionally, one of several proteins that assist in the late maturation steps of the functional core of the 30S ribosomal subunit. Associates with free 30S ribosomal subunits (but not with 30S subunits that are part of 70S ribosomes or polysomes). Required for efficient processing of 16S rRNA. May interact with the 5'-terminal helix region of 16S rRNA. This chain is Ribosome-binding factor A, found in Paracoccus denitrificans (strain Pd 1222).